The sequence spans 445 residues: D-serine transporter DsdX (445 aa).

The next 12 membrane-spanning stretches (helical) occupy residues 5–25, 29–49, 57–77, 106–126, 140–160, 178–198, 224–244, 265–285, 302–322, 343–363, 385–405, and 425–445; these read IWVV…IVKF, PFLA…MGPL, SGIG…TILG, VLVG…VLLI, LLKL…VVPP, VIVY…PLFL, TLPS…LMLV, IGNP…VLGI, FGSI…NAIL, ILLA…ATVA, IIAI…DSLF, and TATF…SFII.

The protein belongs to the GntP permease family.

The protein resides in the cell inner membrane. Its activity is regulated as follows. Uptake of D-serine is inhibited by carbonyl cyanide m-chlorophenylhydrazone (CCCP), and at high concentrations of D-threonine, stimulated by D-cycloserine and not affected by D-alanine or glycine. In terms of biological role, protein that allows transport of D-serine across the inner membrane, does not transport D-alanine nor probably glycine. Is probably a H(+) symporter, as CCCP inhibits transport. Transports D-serine more efficiently than CycA. The polypeptide is D-serine transporter DsdX (dsdX) (Escherichia coli O6:H1 (strain CFT073 / ATCC 700928 / UPEC)).